Here is a 75-residue protein sequence, read N- to C-terminus: ATP synthase subunit c (75 aa).

Transmembrane regions (helical) follow at residues 9-29 (IGAG…GIIF) and 54-74 (FALA…ILFA).

Belongs to the ATPase C chain family. F-type ATPases have 2 components, F(1) - the catalytic core - and F(0) - the membrane proton channel. F(1) has five subunits: alpha(3), beta(3), gamma(1), delta(1), epsilon(1). F(0) has three main subunits: a(1), b(2) and c(10-14). The alpha and beta chains form an alternating ring which encloses part of the gamma chain. F(1) is attached to F(0) by a central stalk formed by the gamma and epsilon chains, while a peripheral stalk is formed by the delta and b chains.

The protein localises to the cell inner membrane. F(1)F(0) ATP synthase produces ATP from ADP in the presence of a proton or sodium gradient. F-type ATPases consist of two structural domains, F(1) containing the extramembraneous catalytic core and F(0) containing the membrane proton channel, linked together by a central stalk and a peripheral stalk. During catalysis, ATP synthesis in the catalytic domain of F(1) is coupled via a rotary mechanism of the central stalk subunits to proton translocation. Functionally, key component of the F(0) channel; it plays a direct role in translocation across the membrane. A homomeric c-ring of between 10-14 subunits forms the central stalk rotor element with the F(1) delta and epsilon subunits. In Pelagibacter ubique (strain HTCC1062), this protein is ATP synthase subunit c.